The chain runs to 156 residues: Large ribosomal subunit protein uL30 (156 aa).

The protein belongs to the universal ribosomal protein uL30 family. As to quaternary structure, part of the 50S ribosomal subunit.

The protein is Large ribosomal subunit protein uL30 of Thermofilum pendens (strain DSM 2475 / Hrk 5).